The primary structure comprises 241 residues: Fatty acid metabolism regulator protein (241 aa).

Positions 11–79 (QSPAALAEEY…HGKPTKVNNI (69 aa)) constitute an HTH gntR-type domain. The H-T-H motif DNA-binding region spans 39–58 (ERDLADKIGVTRTTLREVLQ).

Homodimer.

It localises to the cytoplasm. Its function is as follows. Multifunctional regulator of fatty acid metabolism. The sequence is that of Fatty acid metabolism regulator protein from Haemophilus influenzae (strain 86-028NP).